The following is a 478-amino-acid chain: ATP-dependent RNA helicase DDX19A (478 aa).

Ala2 is subject to N-acetylalanine. Residues Ala2–Glu299 are N-terminal lobe. A Glycyl lysine isopeptide (Lys-Gly) (interchain with G-Cter in SUMO1); alternate cross-link involves residue Lys26. Residue Lys26 forms a Glycyl lysine isopeptide (Lys-Gly) (interchain with G-Cter in SUMO2); alternate linkage. Positions Lys31–Arg55 are disordered. Residues Asp54–Ser67 are N-terminal helix. Residues Lys91 to Glu119 carry the Q motif motif. ATP contacts are provided by residues Gln118 and Ser137–Thr144. In terms of domain architecture, Helicase ATP-binding spans Met124–Ile294. A DEAD box motif is present at residues Asp241–Asp244. Positions Glu300–Asn478 are C-terminal lobe. One can recognise a Helicase C-terminal domain in the interval Thr305–Ile473. ATP-binding residues include Arg428 and Arg431.

This sequence belongs to the DEAD box helicase family. DDX19/DBP5 subfamily.

It localises to the cytoplasm. It is found in the nucleus. The protein resides in the nucleoplasm. The enzyme catalyses ATP + H2O = ADP + phosphate + H(+). ATP-dependent RNA helicase involved in mRNA export from the nucleus. Rather than unwinding RNA duplexes, DDX19 functions as a remodeler of ribonucleoprotein particles, whereby proteins bound to nuclear mRNA are dissociated and replaced by cytoplasmic mRNA binding proteins. The sequence is that of ATP-dependent RNA helicase DDX19A (DDX19A) from Bos taurus (Bovine).